A 46-amino-acid polypeptide reads, in one-letter code: Major urinary protein (46 aa).

N-linked (GlcNAc...) asparagine glycosylation is present at N15.

The protein belongs to the calycin superfamily. Lipocalin family. In terms of tissue distribution, found in many tissues including liver, urine, preputial gland, clitoral gland, submandibular gland and salivary gland.

It is found in the secreted. Binds pheromones that are released from drying urine of males. These pheromones affect the sexual behavior of females. Acts as a shuttle for pheromonal communication between individuals of the same species. This chain is Major urinary protein, found in Rattus rattus (Black rat).